The following is a 397-amino-acid chain: Exodeoxyribonuclease 7 large subunit (397 aa).

This sequence belongs to the XseA family. Heterooligomer composed of large and small subunits.

Its subcellular location is the cytoplasm. The catalysed reaction is Exonucleolytic cleavage in either 5'- to 3'- or 3'- to 5'-direction to yield nucleoside 5'-phosphates.. Bidirectionally degrades single-stranded DNA into large acid-insoluble oligonucleotides, which are then degraded further into small acid-soluble oligonucleotides. The protein is Exodeoxyribonuclease 7 large subunit of Anaplasma marginale (strain Florida).